We begin with the raw amino-acid sequence, 99 residues long: A-type ATP synthase subunit F (99 aa).

The protein belongs to the V-ATPase F subunit family. In terms of assembly, has multiple subunits with at least A(3), B(3), C, D, E, F, H, I and proteolipid K(x).

The protein localises to the cell membrane. Its function is as follows. Component of the A-type ATP synthase that produces ATP from ADP in the presence of a proton gradient across the membrane. The protein is A-type ATP synthase subunit F of Methanococcus maripaludis (strain C6 / ATCC BAA-1332).